A 546-amino-acid chain; its full sequence is Chromosomal replication initiator protein DnaA (546 aa).

The tract at residues 1 to 85 (MSDPQAALRA…TRALSQHMGR (85 aa)) is domain I, interacts with DnaA modulators. Residues 85-204 (RPCSLAVTIA…EPAHNPNREK (120 aa)) are domain II. The segment covering 96 to 111 (PPQPAPQEEPPAPAPQ) has biased composition (pro residues). The segment at 96–209 (PPQPAPQEEP…PNREKSLNPK (114 aa)) is disordered. Over residues 126 to 145 (QTQAFQQPTQSTQPAPASQP) the composition is skewed to low complexity. The span at 191–209 (IPREEPAHNPNREKSLNPK) shows a compositional bias: basic and acidic residues. Residues 205-421 (SLNPKHTFEN…GALIRVSAYS (217 aa)) form a domain III, AAA+ region region. ATP-binding residues include Gly-249, Gly-251, Lys-252, and Thr-253. Residues 422–546 (SLVNEPISLE…TQRVKNHNQR (125 aa)) form a domain IV, binds dsDNA region.

The protein belongs to the DnaA family. In terms of assembly, oligomerizes as a right-handed, spiral filament on DNA at oriC.

The protein resides in the cytoplasm. Its function is as follows. Plays an essential role in the initiation and regulation of chromosomal replication. ATP-DnaA binds to the origin of replication (oriC) to initiate formation of the DNA replication initiation complex once per cell cycle. Binds the DnaA box (a 9 base pair repeat at the origin) and separates the double-stranded (ds)DNA. Forms a right-handed helical filament on oriC DNA; dsDNA binds to the exterior of the filament while single-stranded (ss)DNA is stabiized in the filament's interior. The ATP-DnaA-oriC complex binds and stabilizes one strand of the AT-rich DNA unwinding element (DUE), permitting loading of DNA polymerase. After initiation quickly degrades to an ADP-DnaA complex that is not apt for DNA replication. Binds acidic phospholipids. In Corynebacterium aurimucosum (strain ATCC 700975 / DSM 44827 / CIP 107346 / CN-1) (Corynebacterium nigricans), this protein is Chromosomal replication initiator protein DnaA.